A 623-amino-acid chain; its full sequence is Protein skinhead-1 (623 aa).

Disordered stretches follow at residues 1 to 29, 158 to 184, 421 to 451, and 467 to 557; these read MGGS…FSSV, TEHP…YEYS, YQST…GSVT, and QRHS…LASD. Ser164 is modified (phosphoserine; by pmk-1). The segment covering 173–184 has biased composition (polar residues); that stretch reads ERPTTSSRYEYS. The residue at position 430 (Ser430) is a Phosphoserine; by pmk-1. Low complexity-rich tracts occupy residues 435 to 449, 472 to 498, and 511 to 529; these read GSSG…SPGS, SDCT…ESST, and PSSG…SQSS. The segment at 540–623 is basic motif; it reads SGQRKRGRQS…DRHDKMSHYI (84 aa).

Belongs to the bZIP family. Skn1 subfamily. Monomer. Interacts with GATA factor elt-3; interaction may enhance transcriptional activation of target genes. In terms of assembly, interacts with pgma-5. Interacts with transcription factor mxl-3 (via N-terminus). Cleaved by the aspartic protease ddi-1. As to expression, postembryonic intestinal cells.

It is found in the nucleus. The protein localises to the cytoplasm. The protein resides in the mitochondrion. Its function is as follows. Transcription factor. Required to specify the fate of ventral blastomeres in the early embryo, and postembryonically for the development of the intestine. Directly regulates expression of zygotically expressed med-1 and med-2 to direct mesendoderm development. In response to oxidative stress and anoxia, required to up-regulate expression of stl-1 mRNA. Involved in regulating innate immunity, acting downstream of the pmk-1 p38/MAPK pathway and probably also downstream of nipi-3. Required for the up-regulation of phase II detoxification genes, including gcs-1 and several glutathione-S-transferase mRNAs in response to oxidative stress generated during pathogenic bacterial infection. Modulates oxidative stress responses in concert with transcription factors such as hcf-1 and elt-3. Regulates the transcription of genes associated with metabolism in response to changes in nutrient availability. In neurons, involved in mitochondrial fusion and behavioral recovery during reoxygenation. Required for riok-1 mRNA expression in the intestine. Downstream of the let-60/Ras, mek-2 and pmk-1 pathway, positively regulates lifespan probably by preventing transcription of insulin-like peptides such as ins-39. Prevents degeneration of dopaminergic CEP neurons in response to high Al(3+) or Mn(2+) levels, probably by promoting the expression of glutathione-S-transferase gst-1. In terms of biological role, directed by the ER-associated degradation pathway (ERAD), mediates proteasomal homeostasis by regulating the expression of proteasomal subunits such as rpt-3 to confer resistance to proteasomal dysfunction. The polypeptide is Protein skinhead-1 (skn-1) (Caenorhabditis elegans).